Consider the following 788-residue polypeptide: Protein translocase subunit SecA 2 (788 aa).

ATP contacts are provided by residues Gln-86, 104–108, and Asp-493; that span reads GEGKT.

The protein belongs to the SecA family. In terms of assembly, monomer and homodimer. Part of the essential Sec protein translocation apparatus which comprises SecA, SecYEG and auxiliary proteins SecDF. Other proteins may also be involved.

It is found in the cell membrane. The protein localises to the cytoplasm. It catalyses the reaction ATP + H2O + cellular proteinSide 1 = ADP + phosphate + cellular proteinSide 2.. In terms of biological role, part of the Sec protein translocase complex. Interacts with the SecYEG preprotein conducting channel. Has a central role in coupling the hydrolysis of ATP to the transfer of proteins into and across the cell membrane, serving as an ATP-driven molecular motor driving the stepwise translocation of polypeptide chains across the membrane. This is Protein translocase subunit SecA 2 from Geobacillus thermodenitrificans (strain NG80-2).